The following is a 211-amino-acid chain: Thymidylate kinase (211 aa).

Position 10 to 17 (10 to 17 (GVEGCGKT)) interacts with ATP.

This sequence belongs to the thymidylate kinase family.

The enzyme catalyses dTMP + ATP = dTDP + ADP. Phosphorylation of dTMP to form dTDP in both de novo and salvage pathways of dTTP synthesis. The protein is Thymidylate kinase of Trichormus variabilis (strain ATCC 29413 / PCC 7937) (Anabaena variabilis).